The primary structure comprises 204 residues: Ciliary microtubule inner protein 7 (204 aa).

Its subcellular location is the cell projection. It is found in the cilium. This chain is Ciliary microtubule inner protein 7, found in Homo sapiens (Human).